The chain runs to 440 residues: Transposon Ty1-DR2 Gag polyprotein (440 aa).

Polar residues-rich tracts occupy residues 1–31 and 137–168; these read MESQQLSQHSPISHGSACASVTSKEVQTTQD and VGTHLNTPSPESGNSFPDSSSAKSNMTSTNQH. 3 disordered regions span residues 1 to 75, 137 to 174, and 350 to 440; these read MESQ…PQAA, VGTHLNTPSPESGNSFPDSSSAKSNMTSTNQHVRPPPI, and QQES…PGTY. Residues 299–401 are RNA-binding; that stretch reads NNGIPINNKV…NSQSRTARAH (103 aa). A compositionally biased stretch (basic and acidic residues) spans 363-372; it reads SPSDEKKDSR. A compositionally biased stretch (polar residues) spans 373–409; the sequence is TYTNTTKPKSITRNSQKPNNSQSRTARAHNVSTSNNF. Positions 429 to 440 are enriched in basic and acidic residues; sequence NKHDLHLRPGTY.

As to quaternary structure, homotrimer.

Its subcellular location is the cytoplasm. Functionally, capsid protein (CA) is the structural component of the virus-like particle (VLP), forming the shell that encapsulates the retrotransposons dimeric RNA genome. The particles are assembled from trimer-clustered units and there are holes in the capsid shells that allow for the diffusion of macromolecules. CA also has nucleocapsid-like chaperone activity, promoting primer tRNA(i)-Met annealing to the multipartite primer-binding site (PBS), dimerization of Ty1 RNA and initiation of reverse transcription. This Saccharomyces cerevisiae (strain ATCC 204508 / S288c) (Baker's yeast) protein is Transposon Ty1-DR2 Gag polyprotein (TY1A-DR2).